The primary structure comprises 419 residues: L-rhamnose isomerase (419 aa).

Positions 262, 294, and 296 each coordinate Mn(2+).

This sequence belongs to the rhamnose isomerase family. In terms of assembly, homotetramer. Requires Mn(2+) as cofactor.

The protein resides in the cytoplasm. It carries out the reaction L-rhamnopyranose = L-rhamnulose. It functions in the pathway carbohydrate degradation; L-rhamnose degradation; glycerone phosphate from L-rhamnose: step 1/3. Catalyzes the interconversion of L-rhamnose and L-rhamnulose. The protein is L-rhamnose isomerase of Salmonella enteritidis PT4 (strain P125109).